Reading from the N-terminus, the 309-residue chain is Succinoglycan biosynthesis protein ExoM (309 aa).

Belongs to the glycosyltransferase 2 family.

It localises to the cell inner membrane. It participates in glycan metabolism; exopolysaccharide biosynthesis. Glycosyltransferase required for the synthesis of succinoglycan (EPS I). Needed for the addition of the fourth sugar (glucose), catalyzes the formation of a beta-1,4 linkage between the third acetylated sugar and the fourth sugar. This chain is Succinoglycan biosynthesis protein ExoM (exoM), found in Rhizobium meliloti (strain 1021) (Ensifer meliloti).